The primary structure comprises 206 residues: tRNA(Phe) 7-((3-amino-3-carboxypropyl)-4-demethylwyosine(37)-N(4))-methyltransferase 2 (206 aa).

It belongs to the TYW3 family.

It carries out the reaction 4-demethyl-7-[(3S)-3-amino-3-carboxypropyl]wyosine(37) in tRNA(Phe) + S-adenosyl-L-methionine = 7-[(3S)-3-amino-3-carboxypropyl]wyosine(37) in tRNA(Phe) + S-adenosyl-L-homocysteine + H(+). Its function is as follows. S-adenosyl-L-methionine-dependent methyltransferase that acts as a component of the wyosine derivatives biosynthesis pathway. Probably methylates N-4 position of wybutosine-86 to produce wybutosine-72. This is tRNA(Phe) 7-((3-amino-3-carboxypropyl)-4-demethylwyosine(37)-N(4))-methyltransferase 2 from Pyrococcus horikoshii (strain ATCC 700860 / DSM 12428 / JCM 9974 / NBRC 100139 / OT-3).